The following is a 159-amino-acid chain: Ribosomal RNA large subunit methyltransferase H (159 aa).

Residues Leu-76 and Gly-108 each contribute to the S-adenosyl-L-methionine site.

This sequence belongs to the RNA methyltransferase RlmH family. In terms of assembly, homodimer.

The protein resides in the cytoplasm. It catalyses the reaction pseudouridine(1915) in 23S rRNA + S-adenosyl-L-methionine = N(3)-methylpseudouridine(1915) in 23S rRNA + S-adenosyl-L-homocysteine + H(+). Its function is as follows. Specifically methylates the pseudouridine at position 1915 (m3Psi1915) in 23S rRNA. This Natranaerobius thermophilus (strain ATCC BAA-1301 / DSM 18059 / JW/NM-WN-LF) protein is Ribosomal RNA large subunit methyltransferase H.